Consider the following 230-residue polypeptide: Orotidine 5'-phosphate decarboxylase (230 aa).

Substrate contacts are provided by residues Asp11, Lys34, 61–70 (DLKLHDIPNT), Thr117, Arg179, Gln188, Gly208, and Arg209. The Proton donor role is filled by Lys63.

This sequence belongs to the OMP decarboxylase family. Type 1 subfamily. As to quaternary structure, homodimer.

It carries out the reaction orotidine 5'-phosphate + H(+) = UMP + CO2. It functions in the pathway pyrimidine metabolism; UMP biosynthesis via de novo pathway; UMP from orotate: step 2/2. Catalyzes the decarboxylation of orotidine 5'-monophosphate (OMP) to uridine 5'-monophosphate (UMP). The sequence is that of Orotidine 5'-phosphate decarboxylase from Streptococcus gordonii (strain Challis / ATCC 35105 / BCRC 15272 / CH1 / DL1 / V288).